Consider the following 172-residue polypeptide: Small ribosomal subunit protein uS5 (172 aa).

The S5 DRBM domain maps to 17-80 (LREKMISVNR…DEARRKMVKV (64 aa)).

The protein belongs to the universal ribosomal protein uS5 family. In terms of assembly, part of the 30S ribosomal subunit. Contacts proteins S4 and S8.

Its function is as follows. With S4 and S12 plays an important role in translational accuracy. In terms of biological role, located at the back of the 30S subunit body where it stabilizes the conformation of the head with respect to the body. In Cupriavidus pinatubonensis (strain JMP 134 / LMG 1197) (Cupriavidus necator (strain JMP 134)), this protein is Small ribosomal subunit protein uS5.